Here is a 327-residue protein sequence, read N- to C-terminus: Pantothenate kinase (327 aa).

105-112 is an ATP binding site; that stretch reads GSVAVGKS.

This sequence belongs to the prokaryotic pantothenate kinase family.

It is found in the cytoplasm. The catalysed reaction is (R)-pantothenate + ATP = (R)-4'-phosphopantothenate + ADP + H(+). It participates in cofactor biosynthesis; coenzyme A biosynthesis; CoA from (R)-pantothenate: step 1/5. This is Pantothenate kinase from Cutibacterium acnes (strain DSM 16379 / KPA171202) (Propionibacterium acnes).